The following is a 421-amino-acid chain: Bone morphogenetic protein 10 (421 aa).

A signal peptide spans 1–21 (MGSLVLPLSAVFCLVAHSASG). The propeptide occupies 22 to 313 (SPIMGLEQSP…IDDSSARIRR (292 aa)). 2 N-linked (GlcNAc...) asparagine glycosylation sites follow: Asn-67 and Asn-131. Intrachain disulfides connect Cys-320–Cys-386, Cys-349–Cys-418, and Cys-353–Cys-420.

Belongs to the TGF-beta family. Homodimer; disulfide-linked. Interacts with FBN1 (via N-terminal domain) and FBN2. Interacts with ENG. As to expression, in the embryo, expressed exclusively in the ventricular trabecular myocardium of the developing heart from 9.0 dpc-13.5 dpc. By 16.5 dpc-18.5 dpc, only detectable in atria. Highly expressed in the adult heart where it is found in the right atrium but not in the left atrium. Lower levels in adult liver and lung.

The protein localises to the secreted. Functionally, required for maintaining the proliferative activity of embryonic cardiomyocytes by preventing premature activation of the negative cell cycle regulator CDKN1C/p57KIP and maintaining the required expression levels of cardiogenic factors such as MEF2C and NKX2-5. Acts as a ligand for ACVRL1/ALK1, BMPR1A/ALK3 and BMPR1B/ALK6, leading to activation of SMAD1, SMAD5 and SMAD8 transcription factors. Inhibits endothelial cell migration and growth. May reduce cell migration and cell matrix adhesion in breast cancer cell lines. This chain is Bone morphogenetic protein 10 (Bmp10), found in Mus musculus (Mouse).